A 450-amino-acid polypeptide reads, in one-letter code: Phosphoglucosamine mutase (450 aa).

Catalysis depends on Ser-101, which acts as the Phosphoserine intermediate. Mg(2+) contacts are provided by Ser-101, Asp-240, Asp-242, and Asp-244. Ser-101 bears the Phosphoserine mark.

This sequence belongs to the phosphohexose mutase family. Mg(2+) serves as cofactor. Activated by phosphorylation.

The enzyme catalyses alpha-D-glucosamine 1-phosphate = D-glucosamine 6-phosphate. In terms of biological role, catalyzes the conversion of glucosamine-6-phosphate to glucosamine-1-phosphate. The sequence is that of Phosphoglucosamine mutase from Streptococcus pneumoniae (strain JJA).